We begin with the raw amino-acid sequence, 448 residues long: Probable protein phosphatase 2C 74 (448 aa).

The disordered stretch occupies residues 1 to 48 (MGSCLSSSGGGGSRRSLHGSPHVPGPGRRKRPPKRRPGSCSSSFDNTE). Residue G2 is the site of N-myristoyl glycine attachment. The segment covering 27-37 (GRRKRPPKRRP) has biased composition (basic residues). One can recognise a PPM-type phosphatase domain in the interval 67-384 (TVSLFSQQGK…DDCAVVCLFL (318 aa)). Mn(2+) contacts are provided by D103, G104, D329, and D375. Residues 401–431 (HINNGVTEPEPDTASSSTPDSGTGSPELNGV) are disordered. Low complexity predominate over residues 412–426 (DTASSSTPDSGTGSP).

This sequence belongs to the PP2C family. As to quaternary structure, interacts with KIN10. Requires Mg(2+) as cofactor. Mn(2+) serves as cofactor. As to expression, expressed in the whole plant.

The protein localises to the cell membrane. The catalysed reaction is O-phospho-L-seryl-[protein] + H2O = L-seryl-[protein] + phosphate. It carries out the reaction O-phospho-L-threonyl-[protein] + H2O = L-threonyl-[protein] + phosphate. In terms of biological role, acts as a protein phosphatase. The protein is Probable protein phosphatase 2C 74 of Arabidopsis thaliana (Mouse-ear cress).